The following is a 438-amino-acid chain: Argininosuccinate lyase (438 aa).

Belongs to the lyase 1 family. Argininosuccinate lyase subfamily.

Its subcellular location is the cytoplasm. It catalyses the reaction 2-(N(omega)-L-arginino)succinate = fumarate + L-arginine. It functions in the pathway amino-acid biosynthesis; L-arginine biosynthesis; L-arginine from L-ornithine and carbamoyl phosphate: step 3/3. The chain is Argininosuccinate lyase from Clostridium kluyveri (strain NBRC 12016).